A 653-amino-acid chain; its full sequence is Glyceraldehyde-3-phosphate:ferredoxin oxidoreductase (653 aa).

Residues Arg-70, Gly-89, Arg-196, Ala-197, Gly-199, and Arg-206 each contribute to the tungstopterin site. Residues Cys-333 and Cys-337 each coordinate [4Fe-4S] cluster. Asp-378, Asp-383, and Asp-544 together coordinate tungstopterin. [4Fe-4S] cluster is bound at residue Cys-549.

The protein belongs to the AOR/FOR family. Monomer. [4Fe-4S] cluster is required as a cofactor. Requires tungstopterin as cofactor.

The enzyme catalyses D-glyceraldehyde 3-phosphate + 2 oxidized [2Fe-2S]-[ferredoxin] + H2O = (2R)-3-phosphoglycerate + 2 reduced [2Fe-2S]-[ferredoxin] + 3 H(+). Sensitive to oxygen. Activity increased by 58%-93% in the presence of acetyl phosphate, 3-phosphoglycerate or 2,3-bisphosphoglycerate at 10 mM concentration. Inhibited by up to 25% in the presence of crotonaldehyde or formaldehyde at 10 mM concentration. Inhibited by up to 50% by sodium dithionate. 3.5-fold increase in activity observed by addition of potassium phosphate or sodium arsenate at 200 mM concentration. Activity enhanced by potassium chloride, sodium citrate or sodium sulfate at 200 mM concentration. Catalyzes the oxidation of glyceraldehyde-3-phosphate to 3-phosphoglycerate. Uses ferredoxin as electron acceptor. In vitro can also use benzyl viologen, but not NADP or NAD, as electron acceptor. Probably acts as a glycolytic enzyme in place of glyceraldehyde-3-phosphate dehydrogenase (GAPDH) and phosphoglycerate kinase (PGK) in an unusual Emden-Meyerhof glycolysis. This is Glyceraldehyde-3-phosphate:ferredoxin oxidoreductase from Pyrococcus furiosus (strain ATCC 43587 / DSM 3638 / JCM 8422 / Vc1).